Here is a 345-residue protein sequence, read N- to C-terminus: Tropomodulin-4 (345 aa).

Residues Asn-42 to Leu-63 form a disordered region.

The protein belongs to the tropomodulin family. In terms of assembly, binds to the N-terminus of tropomyosin and to actin.

It localises to the cytoplasm. It is found in the cytoskeleton. Functionally, blocks the elongation and depolymerization of the actin filaments at the pointed end. The Tmod/TM complex contributes to the formation of the short actin protofilament, which in turn defines the geometry of the membrane skeleton. The sequence is that of Tropomodulin-4 (TMOD4) from Bos taurus (Bovine).